We begin with the raw amino-acid sequence, 251 residues long: Keratin-associated protein 10-10 (251 aa).

Tandem repeats lie at residues 26-30 (CCEPC), 31-35 (CCAPA), 52-56 (CCQTA), 84-88 (CCTSS), 94-98 (CCVPV), 99-103 (CCVPV), 104-109 (CCVPVC), 126-130 (CCQQS), 136-140 (CCTSS), 146-150 (CCVPV), 168-172 (CCQQS), 178-182 (CCTAS), 183-187 (CCRPS), 202-206 (CCVPV), and 220-224 (CCRTA). Residues 26–224 (CCEPCCCAPA…SCQPSCCRTA (199 aa)) are 15 X 5 AA repeats of C-C-X(3).

Belongs to the KRTAP type 10 family. In terms of assembly, interacts with hair keratins. In terms of tissue distribution, restricted to a narrow region of the hair fiber cuticle, lying approximately 20 cell layers above the apex of the dermal papilla of the hair root; not detected in any other tissues.

In the hair cortex, hair keratin intermediate filaments are embedded in an interfilamentous matrix, consisting of hair keratin-associated proteins (KRTAP), which are essential for the formation of a rigid and resistant hair shaft through their extensive disulfide bond cross-linking with abundant cysteine residues of hair keratins. The matrix proteins include the high-sulfur and high-glycine-tyrosine keratins. The sequence is that of Keratin-associated protein 10-10 (KRTAP10-10) from Homo sapiens (Human).